A 338-amino-acid polypeptide reads, in one-letter code: MKSVTLDKLQRPLKDLRISVTDRCNFRCRYCMPEEIFGPDYSFLSNDKILSFDEIERITRIFVSLGVRKLRITGGEPLLRRGLPQLIERLNKVDGVEDIGLTTNGSLLKKFAPDLYKAGLSRVTVSLDSLEEERFFYLNGNRSKVQRVLEGIQAAAEVGMKIKINMVVQKGKNEQDILQMAQYFKENKHILRFIEYMDVGNYNGWELKEVVSKQEIVDMIHQVMPLERIEANYAGEVATRYSYIGSDEEIGVISSVTDSFCSSCTRARISAEGKLYTCLFASKGNDLRELLRSDYTDEEITDVVRDIWNNREDRYSDERLSNSNKKAMPKIEMSHIGG.

In terms of domain architecture, Radical SAM core spans 8–227 (KLQRPLKDLR…DMIHQVMPLE (220 aa)). Arg17 lines the GTP pocket. [4Fe-4S] cluster-binding residues include Cys24 and Cys28. Tyr30 lines the S-adenosyl-L-methionine pocket. [4Fe-4S] cluster is bound at residue Cys31. Position 71 (Arg71) interacts with GTP. Gly75 is a binding site for S-adenosyl-L-methionine. Thr102 contributes to the GTP binding site. Position 126 (Ser126) interacts with S-adenosyl-L-methionine. Lys163 contributes to the GTP binding site. An S-adenosyl-L-methionine-binding site is contributed by Met197. 2 residues coordinate [4Fe-4S] cluster: Cys261 and Cys264. 266-268 (RAR) contacts GTP. Cys278 provides a ligand contact to [4Fe-4S] cluster.

Belongs to the radical SAM superfamily. MoaA family. In terms of assembly, monomer and homodimer. The cofactor is [4Fe-4S] cluster.

The enzyme catalyses GTP + AH2 + S-adenosyl-L-methionine = (8S)-3',8-cyclo-7,8-dihydroguanosine 5'-triphosphate + 5'-deoxyadenosine + L-methionine + A + H(+). The protein operates within cofactor biosynthesis; molybdopterin biosynthesis. Its function is as follows. Catalyzes the cyclization of GTP to (8S)-3',8-cyclo-7,8-dihydroguanosine 5'-triphosphate. The protein is GTP 3',8-cyclase of Bacillus anthracis (strain CDC 684 / NRRL 3495).